Consider the following 503-residue polypeptide: WD repeat-containing protein 55 homolog (503 aa).

Residues 1-131 are disordered; sequence MHTHNNFKTP…DSAAFDLDDL (131 aa). Acidic residues-rich tracts occupy residues 12–23 and 37–56; these read DADELDDLDDDM and VGED…DMEA. The segment covering 59–76 has biased composition (polar residues); it reads PNQNADENESISSDSSFD. Acidic residues predominate over residues 78–96; sequence NAEDSSDSDDSMLEEDEAE. 6 WD repeats span residues 157-196, 201-242, 244-282, 285-324, 327-366, and 411-450; these read KLED…NKLL, VHSK…KLYE, AHDD…PIFE, EVED…LYVQ, PYEE…YHCD, and QHNM…DFGD. The segment at 483 to 503 is disordered; that stretch reads TKEDEDNADNNDAAAGPSNSA.

The protein belongs to the WD repeat WDR55 family.

In Drosophila pseudoobscura pseudoobscura (Fruit fly), this protein is WD repeat-containing protein 55 homolog.